A 386-amino-acid chain; its full sequence is Glucose-1-phosphate adenylyltransferase (386 aa).

Residues Tyr-100, Gly-165, 180-181, and Ser-191 contribute to the alpha-D-glucose 1-phosphate site; that span reads EK.

This sequence belongs to the bacterial/plant glucose-1-phosphate adenylyltransferase family. As to quaternary structure, homotetramer.

It catalyses the reaction alpha-D-glucose 1-phosphate + ATP + H(+) = ADP-alpha-D-glucose + diphosphate. The protein operates within glycan biosynthesis; glycogen biosynthesis. In terms of biological role, involved in the biosynthesis of ADP-glucose, a building block required for the elongation reactions to produce glycogen. Catalyzes the reaction between ATP and alpha-D-glucose 1-phosphate (G1P) to produce pyrophosphate and ADP-Glc. The protein is Glucose-1-phosphate adenylyltransferase of Clostridium botulinum (strain Eklund 17B / Type B).